A 498-amino-acid chain; its full sequence is ATP synthase subunit beta, chloroplastic (498 aa).

An ATP-binding site is contributed by 172–179 (GGAGVGKT).

The protein belongs to the ATPase alpha/beta chains family. As to quaternary structure, F-type ATPases have 2 components, CF(1) - the catalytic core - and CF(0) - the membrane proton channel. CF(1) has five subunits: alpha(3), beta(3), gamma(1), delta(1), epsilon(1). CF(0) has four main subunits: a(1), b(1), b'(1) and c(9-12).

Its subcellular location is the plastid. It is found in the chloroplast thylakoid membrane. It carries out the reaction ATP + H2O + 4 H(+)(in) = ADP + phosphate + 5 H(+)(out). Produces ATP from ADP in the presence of a proton gradient across the membrane. The catalytic sites are hosted primarily by the beta subunits. This Buxus microphylla (Littleleaf boxwood) protein is ATP synthase subunit beta, chloroplastic.